We begin with the raw amino-acid sequence, 436 residues long: MANPTIAIVGRPNVGKSTIFNRIAGVRISIVEDTPGVTRDRIYTTGEWLGREFSIIDTGGIDLGDEPFMDQIKHQAEIAIDEADVIIFVASGREGITDADELVAKILYRSNKPVILAVNKVDNPEMRNDIYEFYALGLGDPFPVSGSHGLGIGDVLDEAVKHFPNTSEEEDEDTIKFSLIGRPNVGKSSLINAILGEDRVIVSDIEGTTRDAIDTYFESEEGQKFLMIDTAGMRKRGKVYESTEKYSVMRAMRAIERSDIVLMVLNAEEGIREQDKRVAGYAHEAGRGIIIVVNKWDTVKKDTNTMRDFEAEIRDEFQYLDYAPIIFVSALTKQRLNKLPELIETVSMNQNLRIPSALLNDVVMDAVAINPTPTDKGKRLKIFYATQVAVKPPTFVIFVNEEELMHFSYARFLENQIRKAFTFEGTPIKIIPRRRK.

2 consecutive EngA-type G domains span residues 4–167 (PTIA…PNTS) and 175–351 (IKFS…MNQN). Residues 10 to 17 (GRPNVGKS), 57 to 61 (DTGGI), 119 to 122 (NKVD), 181 to 188 (GRPNVGKS), 229 to 233 (DTAGM), and 294 to 297 (NKWD) contribute to the GTP site. Positions 352 to 436 (LRIPSALLND…PIKIIPRRRK (85 aa)) constitute a KH-like domain.

It belongs to the TRAFAC class TrmE-Era-EngA-EngB-Septin-like GTPase superfamily. EngA (Der) GTPase family. As to quaternary structure, associates with the 50S ribosomal subunit.

GTPase that plays an essential role in the late steps of ribosome biogenesis. The chain is GTPase Der from Enterococcus faecalis (strain ATCC 700802 / V583).